The following is a 339-amino-acid chain: Methylthioribose-1-phosphate isomerase (339 aa).

Substrate is bound by residues Arg-49–Ala-51, Arg-86, and Gln-187. Asp-228 serves as the catalytic Proton donor. Asn-238 to Lys-239 contributes to the substrate binding site.

Belongs to the eIF-2B alpha/beta/delta subunits family. MtnA subfamily.

It catalyses the reaction 5-(methylsulfanyl)-alpha-D-ribose 1-phosphate = 5-(methylsulfanyl)-D-ribulose 1-phosphate. It functions in the pathway amino-acid biosynthesis; L-methionine biosynthesis via salvage pathway; L-methionine from S-methyl-5-thio-alpha-D-ribose 1-phosphate: step 1/6. In terms of biological role, catalyzes the interconversion of methylthioribose-1-phosphate (MTR-1-P) into methylthioribulose-1-phosphate (MTRu-1-P). The sequence is that of Methylthioribose-1-phosphate isomerase from Cronobacter sakazakii (strain ATCC BAA-894) (Enterobacter sakazakii).